The following is a 218-amino-acid chain: MSDNDELQQIAHLRREYTKGGLRRQDLPAEPLDLFERWLKQACEAKLADPTAMVVATVDENSQPYQRIVLLKHYDEKGLVFYTNLGSRKAHHLENNPRISLLFPWHMLERQVMVTGKAERLSTLEVLKYFHSRPRDSQIGAWVSKQSSRISARGVLESKFLELKQKFQQGEVPLPSFWGGFRVSVEQMEFWQGGEHRLHDRFLYQRDNAAWKIDRLAP.

Residues 14–17 (RREY) and K72 each bind substrate. FMN is bound by residues 67-72 (RIVLLK), 82-83 (YT), R88, K89, and Q111. 3 residues coordinate substrate: Y129, R133, and S137. FMN-binding positions include 146–147 (QS) and W191. 197–199 (RLH) is a substrate binding site. R201 serves as a coordination point for FMN.

The protein belongs to the pyridoxamine 5'-phosphate oxidase family. Homodimer. It depends on FMN as a cofactor.

The enzyme catalyses pyridoxamine 5'-phosphate + O2 + H2O = pyridoxal 5'-phosphate + H2O2 + NH4(+). The catalysed reaction is pyridoxine 5'-phosphate + O2 = pyridoxal 5'-phosphate + H2O2. The protein operates within cofactor metabolism; pyridoxal 5'-phosphate salvage; pyridoxal 5'-phosphate from pyridoxamine 5'-phosphate: step 1/1. It functions in the pathway cofactor metabolism; pyridoxal 5'-phosphate salvage; pyridoxal 5'-phosphate from pyridoxine 5'-phosphate: step 1/1. Catalyzes the oxidation of either pyridoxine 5'-phosphate (PNP) or pyridoxamine 5'-phosphate (PMP) into pyridoxal 5'-phosphate (PLP). This Enterobacter sp. (strain 638) protein is Pyridoxine/pyridoxamine 5'-phosphate oxidase.